The chain runs to 452 residues: MEQYDQIGARLDRLPLARFHYRIFGIISFSLLLTGFLSYSGNVVLAKLVSNGWSNNFLNAAFTSALMFGYFIGSLTGGFIGDYFGRRRAFRINLLIVGIAATGAAFVPDMYWLIFFRFLMGTGMGALIMVGYASFTEFIPATVRGKWSARLSFVGNWSPMLSAAIGVVVIAFFSWRIMFLLGGIGILLAWFLSGKYFIESPRWLAGKGQIAGAECQLREVEQQIEREKSIRLPPLTSYQSNSKVKVIKGTFWLLFKGEMLRRTLVAITVLIAMNISLYTITVWIPTIFVNSGIDVDKSILMTAVIMIGAPVGIFIAALIIDHFPRRLFGSTLLIIIAVLGYIYSIQTTEWAILIYGLVMIFFLYMYVCFASAVYIPELWPTHLRLRGSGFVNAVGRIVAVFTPYGVAALLTHYGSITVFMVLGVMLLLCALVLSIFGIETRKVSLEEISEVN.

At 1-20 (MEQYDQIGARLDRLPLARFH) the chain is on the cytoplasmic side. The helical transmembrane segment at 21-43 (YRIFGIISFSLLLTGFLSYSGNV) threads the bilayer. Over 44–57 (VLAKLVSNGWSNNF) the chain is Periplasmic. A helical transmembrane segment spans residues 58–80 (LNAAFTSALMFGYFIGSLTGGFI). Residues 81–91 (GDYFGRRRAFR) are Cytoplasmic-facing. A helical membrane pass occupies residues 92–114 (INLLIVGIAATGAAFVPDMYWLI). Topologically, residues 115-117 (FFR) are periplasmic. Residues 118–140 (FLMGTGMGALIMVGYASFTEFIP) form a helical membrane-spanning segment. Residues 141–152 (ATVRGKWSARLS) lie on the Cytoplasmic side of the membrane. Residues 153 to 175 (FVGNWSPMLSAAIGVVVIAFFSW) form a helical membrane-spanning segment. The Periplasmic portion of the chain corresponds to 176-178 (RIM). A helical transmembrane segment spans residues 179-198 (FLLGGIGILLAWFLSGKYFI). The Cytoplasmic portion of the chain corresponds to 199-265 (ESPRWLAGKG…KGEMLRRTLV (67 aa)). Residues 266–288 (AITVLIAMNISLYTITVWIPTIF) traverse the membrane as a helical segment. The Periplasmic segment spans residues 289-297 (VNSGIDVDK). The helical transmembrane segment at 298-320 (SILMTAVIMIGAPVGIFIAALII) threads the bilayer. The Cytoplasmic segment spans residues 321–326 (DHFPRR). Residues 327 to 344 (LFGSTLLIIIAVLGYIYS) traverse the membrane as a helical segment. At 345–353 (IQTTEWAIL) the chain is on the periplasmic side. A helical membrane pass occupies residues 354–376 (IYGLVMIFFLYMYVCFASAVYIP). At 377 to 388 (ELWPTHLRLRGS) the chain is on the cytoplasmic side. Residues 389-411 (GFVNAVGRIVAVFTPYGVAALLT) form a helical membrane-spanning segment. Topologically, residues 412–415 (HYGS) are periplasmic. The helical transmembrane segment at 416–438 (ITVFMVLGVMLLLCALVLSIFGI) threads the bilayer. Residues 439-452 (ETRKVSLEEISEVN) lie on the Cytoplasmic side of the membrane.

The protein belongs to the major facilitator superfamily. Sugar transporter (TC 2.A.1.1) family.

Its subcellular location is the cell inner membrane. The chain is Inner membrane metabolite transport protein YdjE (ydjE) from Escherichia coli (strain K12).